Reading from the N-terminus, the 325-residue chain is GTP 3',8-cyclase (325 aa).

Residues 4–219 (TYQREINYLR…DAISAKLGPL (216 aa)) enclose the Radical SAM core domain. Residue arginine 13 coordinates GTP. Positions 20 and 24 each coordinate [4Fe-4S] cluster. Tyrosine 26 provides a ligand contact to S-adenosyl-L-methionine. Position 27 (cysteine 27) interacts with [4Fe-4S] cluster. Arginine 63 lines the GTP pocket. Position 67 (glycine 67) interacts with S-adenosyl-L-methionine. Residue threonine 94 participates in GTP binding. Serine 118 provides a ligand contact to S-adenosyl-L-methionine. Position 155 (lysine 155) interacts with GTP. Residue methionine 189 coordinates S-adenosyl-L-methionine. Positions 254 and 257 each coordinate [4Fe-4S] cluster. Residue 259-261 (RLR) participates in GTP binding. Cysteine 271 is a binding site for [4Fe-4S] cluster.

This sequence belongs to the radical SAM superfamily. MoaA family. In terms of assembly, monomer and homodimer. [4Fe-4S] cluster serves as cofactor.

The catalysed reaction is GTP + AH2 + S-adenosyl-L-methionine = (8S)-3',8-cyclo-7,8-dihydroguanosine 5'-triphosphate + 5'-deoxyadenosine + L-methionine + A + H(+). It functions in the pathway cofactor biosynthesis; molybdopterin biosynthesis. In terms of biological role, catalyzes the cyclization of GTP to (8S)-3',8-cyclo-7,8-dihydroguanosine 5'-triphosphate. The protein is GTP 3',8-cyclase of Pelotomaculum thermopropionicum (strain DSM 13744 / JCM 10971 / SI).